A 204-amino-acid chain; its full sequence is Probable nicotinate-nucleotide adenylyltransferase (204 aa).

The protein belongs to the NadD family.

The enzyme catalyses nicotinate beta-D-ribonucleotide + ATP + H(+) = deamido-NAD(+) + diphosphate. The protein operates within cofactor biosynthesis; NAD(+) biosynthesis; deamido-NAD(+) from nicotinate D-ribonucleotide: step 1/1. Functionally, catalyzes the reversible adenylation of nicotinate mononucleotide (NaMN) to nicotinic acid adenine dinucleotide (NaAD). This is Probable nicotinate-nucleotide adenylyltransferase from Mycolicibacterium gilvum (strain PYR-GCK) (Mycobacterium gilvum (strain PYR-GCK)).